We begin with the raw amino-acid sequence, 409 residues long: Arginine deiminase (409 aa).

C399 functions as the Amidino-cysteine intermediate in the catalytic mechanism.

The protein belongs to the arginine deiminase family.

The protein localises to the cytoplasm. It carries out the reaction L-arginine + H2O = L-citrulline + NH4(+). The protein operates within amino-acid degradation; L-arginine degradation via ADI pathway; carbamoyl phosphate from L-arginine: step 1/2. The chain is Arginine deiminase from Borreliella afzelii (strain PKo) (Borrelia afzelii).